Reading from the N-terminus, the 122-residue chain is Large ribosomal subunit protein bL12 (122 aa).

The protein belongs to the bacterial ribosomal protein bL12 family. In terms of assembly, homodimer. Part of the ribosomal stalk of the 50S ribosomal subunit. Forms a multimeric L10(L12)X complex, where L10 forms an elongated spine to which 2 to 4 L12 dimers bind in a sequential fashion. Binds GTP-bound translation factors.

Its function is as follows. Forms part of the ribosomal stalk which helps the ribosome interact with GTP-bound translation factors. Is thus essential for accurate translation. The polypeptide is Large ribosomal subunit protein bL12 (Clostridium botulinum (strain Langeland / NCTC 10281 / Type F)).